The primary structure comprises 184 residues: Jacalin-related lectin 2 (184 aa).

The region spanning 4–163 (KIKIGPVGTD…LQNIGVYLQP (160 aa)) is the Jacalin-type lectin domain.

Belongs to the jacalin lectin family.

This chain is Jacalin-related lectin 2 (JAL2), found in Arabidopsis thaliana (Mouse-ear cress).